Here is a 126-residue protein sequence, read N- to C-terminus: Probable V-type proton ATPase subunit G (126 aa).

Positions 23-45 (NEARKRKLQRTKQAKQEAQAEVE) are disordered. Residues 26–35 (RKRKLQRTKQ) are compositionally biased toward basic residues.

This sequence belongs to the V-ATPase G subunit family. V-ATPase is a heteromultimeric enzyme made up of two complexes: the ATP-hydrolytic V1 complex and the proton translocation V0 complex. The V1 complex consists of three catalytic AB heterodimers that form a heterohexamer, three peripheral stalks each consisting of EG heterodimers, one central rotor including subunits D and F, and the regulatory subunits C and H. The proton translocation complex V0 consists of the proton transport subunit a, a ring of proteolipid subunits c9c'', rotary subunit d, subunits e and f, and the accessory subunits vah-19/Ac45 and vah-20/PRR.

Functionally, subunit of the V1 complex of vacuolar(H+)-ATPase (V-ATPase), a multisubunit enzyme composed of a peripheral complex (V1) that hydrolyzes ATP and a membrane integral complex (V0) that translocates protons. V-ATPase is responsible for acidifying and maintaining the pH of intracellular compartments and in some cell types, is targeted to the plasma membrane, where it is responsible for acidifying the extracellular environment. In neurons, required for necrotic cell death by promoting intracellular acidification. In Caenorhabditis briggsae, this protein is Probable V-type proton ATPase subunit G.